Reading from the N-terminus, the 870-residue chain is DNA mismatch repair protein MutS (870 aa).

An ATP-binding site is contributed by 621–628 (GPNMAGKS). The disordered stretch occupies residues 813 to 834 (GAPRIAKSRRQRTPDPSPQFSL).

The protein belongs to the DNA mismatch repair MutS family.

This protein is involved in the repair of mismatches in DNA. It is possible that it carries out the mismatch recognition step. This protein has a weak ATPase activity. This is DNA mismatch repair protein MutS from Pelobacter propionicus (strain DSM 2379 / NBRC 103807 / OttBd1).